The following is a 432-amino-acid chain: tRNA(Ile)-lysidine synthase (432 aa).

An ATP-binding site is contributed by 19-24; the sequence is STGIDS.

It belongs to the tRNA(Ile)-lysidine synthase family.

The protein resides in the cytoplasm. The enzyme catalyses cytidine(34) in tRNA(Ile2) + L-lysine + ATP = lysidine(34) in tRNA(Ile2) + AMP + diphosphate + H(+). In terms of biological role, ligates lysine onto the cytidine present at position 34 of the AUA codon-specific tRNA(Ile) that contains the anticodon CAU, in an ATP-dependent manner. Cytidine is converted to lysidine, thus changing the amino acid specificity of the tRNA from methionine to isoleucine. This Staphylococcus epidermidis (strain ATCC 35984 / DSM 28319 / BCRC 17069 / CCUG 31568 / BM 3577 / RP62A) protein is tRNA(Ile)-lysidine synthase.